The chain runs to 132 residues: Agouti-related protein (132 aa).

Positions 1–20 (MLTAAVLSCALLLALPATRG) are cleaved as a signal peptide. Residues 21 to 82 (AQMGLAPMEG…VLDLQDREPR (62 aa)) constitute a propeptide that is removed on maturation. Intrachain disulfides connect cysteine 87–cysteine 102, cysteine 94–cysteine 108, cysteine 101–cysteine 119, cysteine 105–cysteine 129, and cysteine 110–cysteine 117. The region spanning 87–129 (CVRLHESCLGQQVPCCDPCATCYCRFFNAFCYCRKLGTAMNPC) is the Agouti domain. Positions 111-113 (RFF) are interaction with melanocortin receptors.

Interacts with melanocortin receptors MC3R, MC4R and MC5R. Expressed primarily in the adrenal gland, subthalamic nucleus, and hypothalamus, with a lower level of expression occurring in testis, lung, and kidney.

Its subcellular location is the secreted. The protein localises to the golgi apparatus lumen. Plays a role in weight homeostasis. Involved in the control of feeding behavior through the central melanocortin system. Acts as alpha melanocyte-stimulating hormone antagonist by inhibiting cAMP production mediated by stimulation of melanocortin receptors within the hypothalamus and adrenal gland. Has very low activity with MC5R. Is an inverse agonist for MC3R and MC4R being able to suppress their constitutive activity. It promotes MC3R and MC4R endocytosis in an arrestin-dependent manner. The protein is Agouti-related protein (AGRP) of Homo sapiens (Human).